Consider the following 345-residue polypeptide: MSTPTPLSYKDAGVDIDAGNALVSNIKAAVKRTRRPEVMGNLGGFGALCELPTKYKQPVLVSGTDGVGTKLRLAIDYKKHDTVGIDLVAMCVNDLIVQGAEPLFFLDYYATGKLDVETATSVVNGIGEGCFQSGCALIGGETAEMPGMYEGEDYDLAGFCVGVVEKADIIDGSKVAAGDALIALASSGPHSNGYSLVRKVLEVSQADPQQDLNGKPLIQHLLEPTKIYVKSLLKLIEASDVHAMAHITGGGFWENIPRVLPENCKAVIQGDSWQWPAVFNWLMENGNIAEYEMYRTFNCGVGMIVALPADKVDAALALLAAEGEQAWLIGAIAPREGNEEQVEIL.

It belongs to the AIR synthase family.

The protein localises to the cytoplasm. The catalysed reaction is 2-formamido-N(1)-(5-O-phospho-beta-D-ribosyl)acetamidine + ATP = 5-amino-1-(5-phospho-beta-D-ribosyl)imidazole + ADP + phosphate + H(+). Its pathway is purine metabolism; IMP biosynthesis via de novo pathway; 5-amino-1-(5-phospho-D-ribosyl)imidazole from N(2)-formyl-N(1)-(5-phospho-D-ribosyl)glycinamide: step 2/2. The polypeptide is Phosphoribosylformylglycinamidine cyclo-ligase (Shewanella sp. (strain MR-7)).